The chain runs to 445 residues: Tubulin beta chain (445 aa).

Residues Gln11, Glu69, Ser138, Gly142, Thr143, Gly144, Asn204, and Asn226 each coordinate GTP. Residue Glu69 coordinates Mg(2+).

It belongs to the tubulin family. Dimer of alpha and beta chains. A typical microtubule is a hollow water-filled tube with an outer diameter of 25 nm and an inner diameter of 15 nM. Alpha-beta heterodimers associate head-to-tail to form protofilaments running lengthwise along the microtubule wall with the beta-tubulin subunit facing the microtubule plus end conferring a structural polarity. Microtubules usually have 13 protofilaments but different protofilament numbers can be found in some organisms and specialized cells. Mg(2+) is required as a cofactor.

It is found in the cytoplasm. The protein localises to the cytoskeleton. Its function is as follows. Tubulin is the major constituent of microtubules, a cylinder consisting of laterally associated linear protofilaments composed of alpha- and beta-tubulin heterodimers. Microtubules grow by the addition of GTP-tubulin dimers to the microtubule end, where a stabilizing cap forms. Below the cap, tubulin dimers are in GDP-bound state, owing to GTPase activity of alpha-tubulin. The sequence is that of Tubulin beta chain (TUB-2) from Schizophyllum commune (Split gill fungus).